The sequence spans 558 residues: Probable beta-glucosidase btgE (558 aa).

The first 18 residues, 1 to 18 (MKAAILATAAALTGSALA), serve as a signal peptide directing secretion. Disordered stretches follow at residues 64-105 (STPS…PETP) and 251-305 (LPSS…QMGM). 2 stretches are compositionally biased toward low complexity: residues 76-105 (PETT…PETP) and 252-292 (PSSS…SSSA). The span at 293-305 (EVPQTTGSGQMGM) shows a compositional bias: polar residues. Glu-399 acts as the Proton donor in catalysis. Catalysis depends on Glu-495, which acts as the Nucleophile.

The protein belongs to the glycosyl hydrolase 17 family.

Its subcellular location is the secreted. It is found in the cell wall. It carries out the reaction Hydrolysis of terminal, non-reducing beta-D-glucosyl residues with release of beta-D-glucose.. It functions in the pathway glycan metabolism; cellulose degradation. Functionally, beta-glucosidases are one of a number of cellulolytic enzymes involved in the degradation of cellulosic biomass. Catalyzes the last step releasing glucose from the inhibitory cellobiose. The protein is Probable beta-glucosidase btgE (btgE) of Aspergillus terreus (strain NIH 2624 / FGSC A1156).